A 54-amino-acid chain; its full sequence is Rubredoxin (54 aa).

Positions 1–54 constitute a Rubredoxin-like domain; that stretch reads MKKYQCIVCGWIYDEAEGWPQDGIAPGTKWEDIPDDWTCPDCGVSKVDFEMIEV. Cys-6, Cys-9, Cys-39, and Cys-42 together coordinate Fe cation.

The protein belongs to the rubredoxin family. It depends on Fe(3+) as a cofactor.

Its subcellular location is the cytoplasm. It functions in the pathway hydrocarbon metabolism; alkane degradation. Involved in the hydrocarbon hydroxylating system, which transfers electrons from NADH to rubredoxin reductase and then through rubredoxin to alkane 1 monooxygenase. The chain is Rubredoxin (rubA) from Acinetobacter baylyi (strain ATCC 33305 / BD413 / ADP1).